We begin with the raw amino-acid sequence, 154 residues long: Protein X (154 aa).

Positions 68 to 117 are mitochondrial targeting sequence; the sequence is PCALRFTSARRMETTVNAHQFLPKVLHKRTLGLSAMSTTDLEAYFKDCLF.

This sequence belongs to the orthohepadnavirus protein X family. May form homodimer. May interact with host CEBPA, CFLAR, CREB1, DDB1, E4F1, HBXIP, HSPD1/HSP60, NFKBIA, POLR2E and SMAD4. Interacts with host SMC5-SMC6 complex and induces its degradation. Interacts with host TRPC4AP; leading to prevent ubiquitination of TRPC4AP. Interacts with host PLSCR1; this interaction promotes ubiquitination and degradation of HBx and impairs HBx-mediated cell proliferation. In terms of processing, a fraction may be phosphorylated in insect cells and HepG2 cells, a human hepatoblastoma cell line. Phosphorylated in vitro by host protein kinase C or mitogen-activated protein kinase. N-acetylated in insect cells.

The protein resides in the host cytoplasm. It localises to the host nucleus. The protein localises to the host mitochondrion. In terms of biological role, multifunctional protein that plays a role in silencing host antiviral defenses and promoting viral transcription. Does not seem to be essential for HBV infection. May be directly involved in development of cirrhosis and liver cancer (hepatocellular carcinoma). Most of cytosolic activities involve modulation of cytosolic calcium. The effect on apoptosis is controversial depending on the cell types in which the studies have been conducted. May induce apoptosis by localizing in mitochondria and causing loss of mitochondrial membrane potential. May also modulate apoptosis by binding host CFLAR, a key regulator of the death-inducing signaling complex (DISC). Promotes viral transcription by using the host E3 ubiquitin ligase DDB1 to target the SMC5-SMC6 complex to proteasomal degradation. This host complex would otherwise bind to viral episomal DNA, and prevents its transcription. Moderately stimulates transcription of many different viral and cellular transcription elements. Promoters and enhancers stimulated by HBx contain DNA binding sites for NF-kappa-B, AP-1, AP-2, c-EBP, ATF/CREB, or the calcium-activated factor NF-AT. The chain is Protein X from Homo sapiens (Human).